A 296-amino-acid chain; its full sequence is Transcription factor MYB72 (296 aa).

HTH myb-type domains lie at 11-63 (KNKV…INYL) and 64-118 (RPDV…KKRL). DNA-binding regions (H-T-H motif) lie at residues 39–63 (WRSLPKLAGLLRCGKSCRLRWINYL) and 91–114 (WSKIASFLPGRTDNEIKNVWNTHL). Positions 118 to 144 (LTPSSSSSSLSSTHDQSTKADHDKNCD) are disordered. A compositionally biased stretch (basic and acidic residues) spans 133-144 (QSTKADHDKNCD).

As to quaternary structure, interacts with EIL3.

Its subcellular location is the nucleus. Involved in metal ions homeostasis, including iron ions (Fe) acquisition, via the regulation of NAS4 and NAS2 genes expression. Necessary for plant survival in alkaline soil where iron availability is greatly restricted. Involved in the up-regulation of several biosynthesis genes of secondary metabolites involved in iron uptake under conditions of iron deficiency. Triggers tolerance to nickel (Ni) and zinc (Zn) ions. Required in the roots during early signaling steps of rhizobacteria-mediated (e.g. P.fluorescens WCS417r) and beneficial fungi-mediated (e.g. T.asperellum T34) broad-spectrum induced systemic resistance (ISR) against several pathogens (e.g. P.syringae pv tomato, H.parasitica, P.cucumerina, A.brassicicola and B.cinerea) and implying enhanced callose deposition. Required for the induction of some genes (e.g. BGLU42) upon rhizobacteria-mediated ISR. This chain is Transcription factor MYB72, found in Arabidopsis thaliana (Mouse-ear cress).